The following is a 2215-amino-acid chain: Unconventional myosin-VIIa (2215 aa).

The region spanning 65-741 (HGVEDMIRLG…HDMLLEVERD (677 aa)) is the Myosin motor domain. 158–165 (GESGAGKT) contributes to the ATP binding site. An actin-binding region spans residues 632-639 (FVRCIKPN). IQ domains lie at 745 to 765 (TDRV…SNFL), 768 to 788 (KSAA…KNYE), 791 to 811 (RLGF…KQYR), 814 to 834 (RQRI…KAFR), and 837 to 857 (LWAV…RLHR). Residues 858–935 (RLRVEYQRRL…LEQMEKARHE (78 aa)) are SAH. The region spanning 1017 to 1253 (YTRRPLKQPL…PSWLELQATK (237 aa)) is the MyTH4 1 domain. The FERM 1 domain maps to 1258-1602 (IMLPVTFMDG…LVVTFLEGLR (345 aa)). A Phosphothreonine modification is found at threonine 1563. Residue serine 1569 is modified to Phosphoserine. Threonine 1571 carries the post-translational modification Phosphothreonine. The SH3 domain maps to 1603-1672 (KRSKYVVALQ…PTDCVYVMPT (70 aa)). Residues 1747-1896 (HTREPLKQAL…PHLVEVEAIQ (150 aa)) enclose the MyTH4 2 domain. The 304-residue stretch at 1902 to 2205 (IFHKVYFPDD…SYISQMLTAM (304 aa)) folds into the FERM 2 domain.

It belongs to the TRAFAC class myosin-kinesin ATPase superfamily. Myosin family. As to quaternary structure, might homodimerize in a two headed molecule through the formation of a coiled-coil rod. Identified in a complex with USH1C and USH1G. Interacts with MYRIP. Interacts with RPE65. Interacts with CIB2. May interact with CALM. Interacts with WHRN. Interacts with PLEKHB1 (via PH domain). Interacts with PCDH15. Interacts with TWF2. Interacts with USH1G. Interacts with MYH9. Interacts (via MyTH4-FERM domains) with cytoplasmic regions of ADGRV1 and USH2A. Interacts with PDZD7 (via MyTH4-FERM domains). Interacts with CALML4. In terms of tissue distribution, detected in mechanosensory stereocilia of cochlea hair cells (at protein level). Expressed in the retina, cochlea, kidney and liver.

The protein resides in the cytoplasm. It is found in the cell cortex. It localises to the cytoskeleton. Its subcellular location is the synapse. In terms of biological role, myosins are actin-based motor molecules with ATPase activity. Unconventional myosins serve in intracellular movements. Their highly divergent tails bind to membranous compartments, which are then moved relative to actin filaments. In the retina, plays an important role in the renewal of the outer photoreceptor disks. Plays an important role in the distribution and migration of retinal pigment epithelial (RPE) melanosomes and phagosomes, and in the regulation of opsin transport in retinal photoreceptors. Mediates intracellular transport of RPE65 in the retina pigment epithelium. In the inner ear, plays an important role in differentiation, morphogenesis and organization of cochlear hair cell bundles. Motor protein that is a part of the functional network formed by USH1C, USH1G, CDH23 and MYO7A that mediates mechanotransduction in cochlear hair cells. Required for normal hearing. Involved in hair-cell vesicle trafficking of aminoglycosides, which are known to induce ototoxicity. This is Unconventional myosin-VIIa (Myo7a) from Mus musculus (Mouse).